A 717-amino-acid polypeptide reads, in one-letter code: Trimethylamine N-oxide transport system permease protein TmoV (717 aa).

17 consecutive transmembrane segments (helical) span residues 10-30 (FFQW…IEVP), 69-89 (LPPL…FLMN), 120-140 (FMTF…ETIV), 153-173 (WAEL…ILGY), 175-195 (LSGK…SVFG), 206-226 (FILV…VMAF), 238-258 (ILLV…IVLF), 265-285 (AVII…LLGL), 319-339 (ILIG…ISAF), 355-375 (QLNI…AILL), 402-422 (ILFF…GSFY), 452-472 (IWDT…VDVL), 488-508 (LVLV…LVVG), 527-547 (LYMA…VGII), 574-594 (LIPV…AVIV), 643-663 (MLGL…GAFI), and 683-703 (GIGL…DHLI). An ABC transmembrane type-1 1 domain is found at 200–379 (SMQTLSFILV…LIAILLDKMS (180 aa)). Residues 523 to 703 (ALVTLYMATF…FIGLIFDHLI (181 aa)) form the ABC transmembrane type-1 2 domain.

The protein belongs to the binding-protein-dependent transport system permease family. In terms of assembly, the complex is probably composed of two ATP-binding proteins (TmoW), two transmembrane proteins (TmoV) and a solute-binding protein (TmoX).

The protein resides in the cell inner membrane. Part of the ABC transporter complex TmoXWV involved in trimethylamine N-oxide (TMAO) import. Responsible for the translocation of the substrate across the membrane. This chain is Trimethylamine N-oxide transport system permease protein TmoV, found in Pelagibacter ubique (strain HTCC1062).